The chain runs to 378 residues: Galanin receptor 2b (378 aa).

The Extracellular segment spans residues 1–30; that stretch reads MSDHEDLNKAMGHWNASESYQLNPASVIVS. The helical transmembrane segment at 31-51 threads the bilayer; it reads VVFSLIFLLGTIGNSLVLAVL. The Cytoplasmic portion of the chain corresponds to 52 to 62; it reads LRSGQVGYNTT. Residues 63–83 form a helical membrane-spanning segment; sequence NLFILNLSVADFFFIIFCVPF. The Extracellular portion of the chain corresponds to 84 to 101; that stretch reads QATIYSLEGWVFGSFMCK. C100 and C177 are disulfide-bonded. The chain crosses the membrane as a helical span at residues 102–123; sequence VVHFFINLTMYASSFTLAAVSV. The Cytoplasmic segment spans residues 124 to 143; that stretch reads DRYLAIRYPLRSRELRTPCN. The helical transmembrane segment at 144–164 threads the bilayer; sequence AVVAMVVIWGLSLVFAGPYLS. Over 165–187 the chain is Extracellular; it reads YYDLIDFENSNVCVPGWEEHNRK. Residues 188 to 208 traverse the membrane as a helical segment; sequence VLDTCTFVFGYVIPVLIVSLS. Residues 209-238 are Cytoplasmic-facing; it reads YTRTIKYLWTAVDPLDGMSESKRAKRKVTK. The chain crosses the membrane as a helical span at residues 239-259; the sequence is MIIIVTVLFCICWLPYHVVIL. The Extracellular portion of the chain corresponds to 260-276; the sequence is CYLYGDFPFNQTTYAFR. The chain crosses the membrane as a helical span at residues 277–297; sequence LLSHCMAYANSCLNPIVYALV. Topologically, residues 298–378 are cytoplasmic; sequence SKHFRKGFKK…TITLPFQNQP (81 aa). The disordered stretch occupies residues 339 to 362; sequence EVSQMNEENARQNESEMVNRPLAQ.

The protein belongs to the G-protein coupled receptor 1 family. As to expression, expressed in neurons in the ventral area of the interpeduncular nucleus (IPN) where expression often overlaps with spx1.

Its subcellular location is the membrane. Functionally, receptor for the hormone galanin. Receptor for the hormones spexin-1 and spexin-2. The protein is Galanin receptor 2b of Danio rerio (Zebrafish).